An 837-amino-acid polypeptide reads, in one-letter code: Valine--tRNA ligase (837 aa).

The short motif at 46-56 (PNLTGTLHIGH) is the 'HIGH' region element. The 'KMSKS' region motif lies at 514–518 (KMSKS). Lys517 contributes to the ATP binding site. A coiled-coil region spans residues 767-837 (VDDTTQRLKS…QLIAKLTKAH (71 aa)).

Belongs to the class-I aminoacyl-tRNA synthetase family. ValS type 1 subfamily. Monomer.

It is found in the cytoplasm. It carries out the reaction tRNA(Val) + L-valine + ATP = L-valyl-tRNA(Val) + AMP + diphosphate. Functionally, catalyzes the attachment of valine to tRNA(Val). As ValRS can inadvertently accommodate and process structurally similar amino acids such as threonine, to avoid such errors, it has a 'posttransfer' editing activity that hydrolyzes mischarged Thr-tRNA(Val) in a tRNA-dependent manner. This Mycoplasma genitalium (strain ATCC 33530 / DSM 19775 / NCTC 10195 / G37) (Mycoplasmoides genitalium) protein is Valine--tRNA ligase.